A 591-amino-acid polypeptide reads, in one-letter code: Aspartate--tRNA(Asp/Asn) ligase (591 aa).

Glutamate 174 lines the L-aspartate pocket. The segment at glutamine 198–lysine 201 is aspartate. Arginine 220 is a binding site for L-aspartate. ATP is bound by residues arginine 220–glutamate 222 and glutamine 229. Histidine 450 provides a ligand contact to L-aspartate. An ATP-binding site is contributed by glutamate 483. Arginine 490 serves as a coordination point for L-aspartate. Position 535–538 (glycine 535–arginine 538) interacts with ATP.

It belongs to the class-II aminoacyl-tRNA synthetase family. Type 1 subfamily. Homodimer.

The protein localises to the cytoplasm. The enzyme catalyses tRNA(Asx) + L-aspartate + ATP = L-aspartyl-tRNA(Asx) + AMP + diphosphate. Functionally, aspartyl-tRNA synthetase with relaxed tRNA specificity since it is able to aspartylate not only its cognate tRNA(Asp) but also tRNA(Asn). Reaction proceeds in two steps: L-aspartate is first activated by ATP to form Asp-AMP and then transferred to the acceptor end of tRNA(Asp/Asn). The sequence is that of Aspartate--tRNA(Asp/Asn) ligase from Pseudomonas putida (strain ATCC 700007 / DSM 6899 / JCM 31910 / BCRC 17059 / LMG 24140 / F1).